We begin with the raw amino-acid sequence, 596 residues long: Elongation factor 4 (596 aa).

One can recognise a tr-type G domain in the interval 2–184; the sequence is KHIRNFSIIA…VIVEQIPPPE (183 aa). Residues 14–19 and 131–134 each bind GTP; these read DHGKST and NKID.

It belongs to the TRAFAC class translation factor GTPase superfamily. Classic translation factor GTPase family. LepA subfamily.

The protein localises to the cell inner membrane. The catalysed reaction is GTP + H2O = GDP + phosphate + H(+). Functionally, required for accurate and efficient protein synthesis under certain stress conditions. May act as a fidelity factor of the translation reaction, by catalyzing a one-codon backward translocation of tRNAs on improperly translocated ribosomes. Back-translocation proceeds from a post-translocation (POST) complex to a pre-translocation (PRE) complex, thus giving elongation factor G a second chance to translocate the tRNAs correctly. Binds to ribosomes in a GTP-dependent manner. In Shewanella sp. (strain MR-7), this protein is Elongation factor 4.